The sequence spans 395 residues: uncharacterized protein (395 aa).

The stretch at 288-318 (VAKGKEIDNAEIEKTIKEYENIEEGIEDIVK) forms a coiled coil.

This is an uncharacterized protein from Ostreid herpesvirus 1 (isolate France) (OsHV-1).